The sequence spans 312 residues: tRNA dimethylallyltransferase (312 aa).

10 to 17 (GPTAVGKT) serves as a coordination point for ATP. 12-17 (TAVGKT) serves as a coordination point for substrate. An interaction with substrate tRNA region spans residues 35–38 (DSMQ).

Belongs to the IPP transferase family. Monomer. It depends on Mg(2+) as a cofactor.

The catalysed reaction is adenosine(37) in tRNA + dimethylallyl diphosphate = N(6)-dimethylallyladenosine(37) in tRNA + diphosphate. Catalyzes the transfer of a dimethylallyl group onto the adenine at position 37 in tRNAs that read codons beginning with uridine, leading to the formation of N6-(dimethylallyl)adenosine (i(6)A). The sequence is that of tRNA dimethylallyltransferase from Alkaliphilus metalliredigens (strain QYMF).